We begin with the raw amino-acid sequence, 551 residues long: Eukaryotic translation initiation factor 3 subunit D-2 (551 aa).

The interval 108 to 152 (RARGRTGRGNATLGGLGGPVAGGSTANSTKYGKGRNTRNAQNMGR) is disordered. A compositionally biased stretch (gly residues) spans 119-128 (TLGGLGGPVA). The segment at 290–304 (QFDLLTVNETSLEPP) is RNA gate. The segment at 530-551 (AFDSDGDDESESSEPFGNSIDN) is disordered. The segment covering 531–541 (FDSDGDDESES) has biased composition (acidic residues).

This sequence belongs to the eIF-3 subunit D family. Component of the eukaryotic translation initiation factor 3 (eIF-3) complex. The eIF-3 complex interacts with pix.

Its subcellular location is the cytoplasm. In terms of biological role, mRNA cap-binding component of the eukaryotic translation initiation factor 3 (eIF-3) complex, which is involved in protein synthesis of a specialized repertoire of mRNAs and, together with other initiation factors, stimulates binding of mRNA and methionyl-tRNAi to the 40S ribosome. The eIF-3 complex specifically targets and initiates translation of a subset of mRNAs involved in cell proliferation. In the eIF-3 complex, eif3d specifically recognizes and binds the 7-methylguanosine cap of a subset of mRNAs. In Drosophila yakuba (Fruit fly), this protein is Eukaryotic translation initiation factor 3 subunit D-2.